The following is a 977-amino-acid chain: Synaptopodin 2-like protein (977 aa).

Residues 6–88 (EVLVTLSGGA…QLVLTVQRLA (83 aa)) form the PDZ domain. 3 disordered regions span residues 91-226 (GPVQ…GPLR), 317-352 (AGTGAEEEDGVPPTSESELDEEAFSDARSLTNQSDW), and 364-677 (AGSR…EDAL). Phosphoserine is present on residues serine 108 and serine 111. Pro residues predominate over residues 109–123 (PLSPEPPGAPVPQPL). Threonine 141 is modified (phosphothreonine). Residues serine 143, serine 178, and serine 180 each carry the phosphoserine modification. Pro residues predominate over residues 183–192 (EPAPTIPGPP). Over residues 194–203 (QGDSRVSSPS) the composition is skewed to polar residues. Low complexity predominate over residues 216-226 (EALLLPHGPLR). 5 positions are modified to phosphoserine: serine 345, serine 350, serine 374, serine 381, and serine 384. Position 386 is an omega-N-methylarginine (arginine 386). Positions 436–450 (PPSPLPAPVASPRPF) are enriched in pro residues. Residues arginine 466, arginine 469, and arginine 479 each carry the omega-N-methylarginine modification. Over residues 510-525 (LSSQGPTPLPSFTSGV) the composition is skewed to polar residues. Composition is skewed to low complexity over residues 530–545 (PVSGSPSTPRSSGPVT) and 572–595 (SAAAMTSTASIFLSAPLRPSARPE). Pro residues predominate over residues 596-607 (APAPGPGAPEPP). 2 positions are modified to phosphoserine: serine 670 and serine 678. Residues 697-802 (TLPHVTPKTP…PSLPPSWKYS (106 aa)) form a disordered region. A compositionally biased stretch (pro residues) spans 704–730 (KTPPPMAPKTPPPMTPKTPPPVAPKPP). Phosphothreonine is present on residues threonine 705 and threonine 713. At arginine 757 the chain carries Omega-N-methylarginine. Pro residues predominate over residues 781 to 796 (GLGPRPRSPSPTPSLP). 2 positions are modified to phosphoserine: serine 788 and serine 790. Position 792 is a phosphothreonine (threonine 792). Omega-N-methylarginine is present on residues arginine 806, arginine 826, and arginine 889. Phosphoserine is present on serine 891. Residues threonine 892 and threonine 898 each carry the phosphothreonine modification. An Omega-N-methylarginine modification is found at arginine 910. Arginine 921 carries the asymmetric dimethylarginine; alternate modification. At arginine 921 the chain carries Omega-N-methylarginine; alternate. The disordered stretch occupies residues 922–950 (TELASAPVPSPAPPPEAPRGLGASPSSCG). Residues 929–938 (VPSPAPPPEA) are compositionally biased toward pro residues. An omega-N-methylarginine mark is found at arginine 955 and arginine 957.

Belongs to the synaptopodin family.

It localises to the cytoplasm. The protein localises to the cytoskeleton. In terms of biological role, actin-associated protein that may play a role in modulating actin-based shape. The sequence is that of Synaptopodin 2-like protein (SYNPO2L) from Homo sapiens (Human).